A 129-amino-acid chain; its full sequence is uncharacterized protein (129 aa).

This is an uncharacterized protein from Mycoplasma genitalium (strain ATCC 33530 / DSM 19775 / NCTC 10195 / G37) (Mycoplasmoides genitalium).